Consider the following 213-residue polypeptide: C-type lectin domain family 4 member C (213 aa).

Over 1 to 21 (MVPEEEPQDREKGLWWFQLKV) the chain is Cytoplasmic. Residues 22 to 44 (WSMAVVSILLLSVCFTVSSVVPH) form a helical; Signal-anchor for type II membrane protein membrane-spanning segment. Residues 45 to 213 (NFMYSKTVKR…SICKMKKIYI (169 aa)) are Extracellular-facing. 2 cysteine pairs are disulfide-bonded: C70–C82 and C83–C94. One can recognise a C-type lectin domain in the interval 90–207 (FQSSCYFIST…CHVPQKSICK (118 aa)). N110 and N137 each carry an N-linked (GlcNAc...) asparagine glycan. 2 disulfides stabilise this stretch: C111-C206 and C180-C198. S139 lines the a carbohydrate pocket. N164 carries an N-linked (GlcNAc...) asparagine glycan. The Ca(2+) site is built by E172, N174, and E178. A carbohydrate contacts are provided by residues E178, 184-186 (NFR), N194, 194-195 (ND), and Q202. Ca(2+) contacts are provided by N194 and D195.

Homodimer. In terms of tissue distribution, expressed in plasmacytoid dendritic cells (PDCs). Constitutively expressed in immature monocyte-derived dendritic cells (iMDDC) and is significantly down-regulated upon maturation with LPS but not with TNF-alpha.

It localises to the cell membrane. Its function is as follows. Lectin-type cell surface receptor which may play a role in antigen capturing by dendritic cells. Specifically recognizes non-sialylated galactose-terminated biantennary glycans containing the trisaccharide epitope Gal(beta1-3/4)GlcNAc(beta1-2)Man. Binds to serum IgG. Efficiently targets ligand into antigen-processing and peptide-loading compartments for presentation to T-cells. May mediate potent inhibition of induction of IFN-alpha/beta expression in plasmacytoid dendritic cells. May act as a signaling receptor that activates protein-tyrosine kinases and mobilizes intracellular calcium. The polypeptide is C-type lectin domain family 4 member C (CLEC4C) (Homo sapiens (Human)).